Reading from the N-terminus, the 205-residue chain is Small ribosomal subunit protein uS4 (205 aa).

Residues 94-157 (SRLDTVVYRM…QQIPLIQESI (64 aa)) enclose the S4 RNA-binding domain.

The protein belongs to the universal ribosomal protein uS4 family. Part of the 30S ribosomal subunit. Contacts protein S5. The interaction surface between S4 and S5 is involved in control of translational fidelity.

Its function is as follows. One of the primary rRNA binding proteins, it binds directly to 16S rRNA where it nucleates assembly of the body of the 30S subunit. In terms of biological role, with S5 and S12 plays an important role in translational accuracy. The chain is Small ribosomal subunit protein uS4 from Rickettsia typhi (strain ATCC VR-144 / Wilmington).